The following is a 206-amino-acid chain: LexA repressor (206 aa).

The H-T-H motif DNA-binding region spans 28-48 (RAEIARELGFRSANAAEEHLK). Residues Ser123 and Lys160 each act as for autocatalytic cleavage activity in the active site.

This sequence belongs to the peptidase S24 family. Homodimer.

The catalysed reaction is Hydrolysis of Ala-|-Gly bond in repressor LexA.. In terms of biological role, represses a number of genes involved in the response to DNA damage (SOS response), including recA and lexA. In the presence of single-stranded DNA, RecA interacts with LexA causing an autocatalytic cleavage which disrupts the DNA-binding part of LexA, leading to derepression of the SOS regulon and eventually DNA repair. The chain is LexA repressor from Vibrio campbellii (strain ATCC BAA-1116).